Reading from the N-terminus, the 815-residue chain is Glycogen phosphorylase (815 aa).

Lysine 662 carries the post-translational modification N6-(pyridoxal phosphate)lysine.

The protein belongs to the glycogen phosphorylase family. The cofactor is pyridoxal 5'-phosphate.

It catalyses the reaction [(1-&gt;4)-alpha-D-glucosyl](n) + phosphate = [(1-&gt;4)-alpha-D-glucosyl](n-1) + alpha-D-glucose 1-phosphate. Phosphorylase is an important allosteric enzyme in carbohydrate metabolism. Enzymes from different sources differ in their regulatory mechanisms and in their natural substrates. However, all known phosphorylases share catalytic and structural properties. This chain is Glycogen phosphorylase (glgP), found in Shigella flexneri.